A 425-amino-acid polypeptide reads, in one-letter code: Glutamate-1-semialdehyde 2,1-aminomutase (425 aa).

N6-(pyridoxal phosphate)lysine is present on K264.

The protein belongs to the class-III pyridoxal-phosphate-dependent aminotransferase family. HemL subfamily. In terms of assembly, homodimer. It depends on pyridoxal 5'-phosphate as a cofactor.

Its subcellular location is the cytoplasm. The enzyme catalyses (S)-4-amino-5-oxopentanoate = 5-aminolevulinate. It functions in the pathway porphyrin-containing compound metabolism; protoporphyrin-IX biosynthesis; 5-aminolevulinate from L-glutamyl-tRNA(Glu): step 2/2. In Campylobacter lari (strain RM2100 / D67 / ATCC BAA-1060), this protein is Glutamate-1-semialdehyde 2,1-aminomutase.